The following is a 425-amino-acid chain: Glutamate-1-semialdehyde 2,1-aminomutase (425 aa).

At Lys-265 the chain carries N6-(pyridoxal phosphate)lysine.

The protein belongs to the class-III pyridoxal-phosphate-dependent aminotransferase family. HemL subfamily. In terms of assembly, homodimer. Requires pyridoxal 5'-phosphate as cofactor.

Its subcellular location is the cytoplasm. The catalysed reaction is (S)-4-amino-5-oxopentanoate = 5-aminolevulinate. The protein operates within porphyrin-containing compound metabolism; protoporphyrin-IX biosynthesis; 5-aminolevulinate from L-glutamyl-tRNA(Glu): step 2/2. The sequence is that of Glutamate-1-semialdehyde 2,1-aminomutase from Laribacter hongkongensis (strain HLHK9).